A 499-amino-acid chain; its full sequence is MALLRCLFLLAVLLPHRNAAVVAAASPHHGPAPHDYRDALTKSILFFEGQRSGKLPPSQRVSWRGDSGLSDGSSIKVDLVGGYYDAGDNMKFGFPLAFSMTMLAWSVVEFGGLMKGELQHARDAVRWGSDYLLKATAHPDTVYVQVGDANRDHACWERPEDMDTPRTVYKVDPSTPGTDVAAETAAALAAASLVFRKSDPAYASRLVARAKRVFEFADKHRGTYSTRLSPYVCPYYCSYSGYQDELLWGAAWLHRATKNPTYLSYIQMNGQVLGADEQDNTFGWDNKHAGARILIAKAFLVQKVAALHEYKGHADSFICSMVPGTPTDQTQYTRGGLLFKLSDSNMQYVTSSSFLLLTYAKYLAFSKTTVSCGGAAVTPARLRAIARQQVDYLLGSNPMGMSYMVGYGAKYPRRIHHRASSLPSVAAHPARIGCSQGFTALYSGVANPNVLVGAVVGGPNLQDQFPDQRSDHEHSEPATYINAPLVGALAYLAHSYGQL.

An N-terminal signal peptide occupies residues 1-19; sequence MALLRCLFLLAVLLPHRNA. The Nucleophile role is filled by aspartate 88. Active-site residues include histidine 416, aspartate 467, and glutamate 476.

Belongs to the glycosyl hydrolase 9 (cellulase E) family. Expressed in flowers.

The protein resides in the secreted. It carries out the reaction Endohydrolysis of (1-&gt;4)-beta-D-glucosidic linkages in cellulose, lichenin and cereal beta-D-glucans.. The chain is Endoglucanase 3 (GLU8) from Oryza sativa subsp. japonica (Rice).